Here is a 208-residue protein sequence, read N- to C-terminus: MEVNVYNIKGEDTGRKVTLNESIFGIEPNDHAIYLDVKQFMANQRQGTHKSKERSEISGSTRKIGRQKGGGGARRGDMNSPVLVGGARVFGPKPRDYFFKLNKKVKTLARKSALSYKVQNNALIVVEDFVFEAPKTKDFVAMTKNLKVSDKKLLVILPEANKNVYLSARNIEGANVQTVSGLNTYRVLNAGVVVLTENSLKAIDNILI.

The interval 44–79 is disordered; that stretch reads QRQGTHKSKERSEISGSTRKIGRQKGGGGARRGDMN.

It belongs to the universal ribosomal protein uL4 family. In terms of assembly, part of the 50S ribosomal subunit.

Functionally, one of the primary rRNA binding proteins, this protein initially binds near the 5'-end of the 23S rRNA. It is important during the early stages of 50S assembly. It makes multiple contacts with different domains of the 23S rRNA in the assembled 50S subunit and ribosome. In terms of biological role, forms part of the polypeptide exit tunnel. This Bacteroides thetaiotaomicron (strain ATCC 29148 / DSM 2079 / JCM 5827 / CCUG 10774 / NCTC 10582 / VPI-5482 / E50) protein is Large ribosomal subunit protein uL4.